A 137-amino-acid polypeptide reads, in one-letter code: MRNFDLSPLYRSAIGFDRLFNLLENNQSQSNGGYPPYNVELVDENHYRIAIAVAGFAESELEITAQDNLLIVKGAHAAEQKERTYLYQGIAERNFERKFQLAENIHVRGANLVNGLLYIDLERVIPEANKPRRIEIN.

The region spanning 28-137 is the sHSP domain; it reads SQSNGGYPPY…ANKPRRIEIN (110 aa).

Belongs to the small heat shock protein (HSP20) family. Monomer. Forms homomultimers of about 100-150 subunits at optimal growth temperatures. Conformation changes to monomers at high temperatures or high ionic concentrations.

The protein resides in the cytoplasm. Its function is as follows. Associates with aggregated proteins, together with IbpB, to stabilize and protect them from irreversible denaturation and extensive proteolysis during heat shock and oxidative stress. Aggregated proteins bound to the IbpAB complex are more efficiently refolded and reactivated by the ATP-dependent chaperone systems ClpB and DnaK/DnaJ/GrpE. Its activity is ATP-independent. This chain is Small heat shock protein IbpA, found in Klebsiella pneumoniae (strain 342).